Consider the following 94-residue polypeptide: MTKSELIERLAGQQSHIPAKVVEDAVKEMLEQMATTLASGDRIEIRGFGSFSLHYRAPRVGRNPKTGEKVELEGKYVPHFKPGKELRDRANIYG.

It belongs to the bacterial histone-like protein family. In terms of assembly, heterodimer of an alpha and a beta chain.

In terms of biological role, this protein is one of the two subunits of integration host factor, a specific DNA-binding protein that functions in genetic recombination as well as in transcriptional and translational control. The protein is Integration host factor subunit beta (ihfB) of Dickeya dadantii (strain 3937) (Erwinia chrysanthemi (strain 3937)).